A 299-amino-acid chain; its full sequence is MVSKLSLYLVTPPGFQPGKIEAQLIGDRYQIKLLDYGQKFLAFLEANKEQIDCLVVVQGKENQDYFECLTQSGILLPCVFLGPTTACEISQEDVSEQLYHSAEKYLDFANLENLSLTIDQAIAQFLHLAPSCALSDKPQDPHHSDPDKTHQAFLLLQQRRLAEKLRERLGYLGVYYKRNPKYFYRSLSPEEQQEFREQFVADYRDIVLSYFSGDLPTNQAIDQFVNQAFFADVSVSYILETHMKLMDEFAQQLKLEGRSEEILLDYRLTLIDIVAHLCEMYRRSIPREDLPFELLFRID.

The KaiA N-terminal domain occupies 1 to 169 (MVSKLSLYLV…RLAEKLRERL (169 aa)). The psR domain, binds oxidized quinones stretch occupies residues 3–135 (SKLSLYLVTP…LHLAPSCALS (133 aa)). A flexible linker region spans residues 170–178 (GYLGVYYKR). The KaiA C-terminal domain occupies 179-287 (NPKYFYRSLS…CEMYRRSIPR (109 aa)).

In terms of assembly, homodimer. The KaiABC complex composition changes during the circadian cycle to control KaiC phosphorylation. Complexes KaiC(6), KaiA(2-4):KaiC(6), KaiB(6):KaiC(6) and KaiC(6):KaiB(6):KaiA(12) are among the most important forms, many form cooperatively. KaiA and CikA bind to the same region of the KaiB(fs) form and therefore compete.

Functionally, key component of the KaiABC oscillator complex, which constitutes the main circadian regulator in cyanobacteria. Complex composition changes during the circadian cycle to control KaiC phosphorylation. KaiA stimulates KaiC autophosphorylation, while KaiB sequesters KaiA, leading to KaiC autodephosphorylation. KaiA binding to the KaiC CII domain during the subjective day yields KaiA(2-4):KaiC(6) complexes which stimulate KaiC autophosphorylation. Phospho-Ser-431 KaiC accumulation triggers binding of KaiB during the subjective night to form the KaiB(6):KaiC(6) complex, leading to changes in the output regulators CikA and SasA. KaiB(6):KaiC(6) formation exposes a site for KaiA binding on KaiB that sequesters KaiA from KaiC's CII domain, making the KaiC(6):KaiB(6):KaiA(12) complex resulting in KaiC autodephosphorylation. Complete dephosphorylation of KaiC leads to dissociation of KaiA(2):KaiB(1), completing 1 cycle of the Kai oscillator. Binds oxidized quinones via the N-terminal PsR domain, allowing it to sense redox changes and possibly mediate clock input. The polypeptide is Circadian clock oscillator protein KaiA (Picosynechococcus sp. (strain ATCC 27264 / PCC 7002 / PR-6) (Agmenellum quadruplicatum)).